The sequence spans 416 residues: Phosphoglycerate kinase (416 aa).

The (2R)-3-phosphoglycerate site is built by Val23, Asp24, Phe25, Asn26, Asn38, Arg39, Ser62, His63, Gly65, Arg66, Leu121, Arg122, His169, and Arg170. An ADP-binding site is contributed by Gly213. Position 213 (Gly213) interacts with CDP. 2 residues coordinate AMP: Ala214 and Lys215. The ATP site is built by Ala214 and Lys215. A Mg(2+)-binding site is contributed by Ala214. Asp218 contacts CDP. Asp218 is a binding site for Mg(2+). Lys219 is a binding site for AMP. Residue Lys219 participates in ATP binding. Gly237 is a binding site for ADP. Gly237 provides a ligand contact to CDP. 2 residues coordinate AMP: Gly238 and Gly312. Residues Gly238 and Gly312 each contribute to the ATP site. Positions 337 and 342 each coordinate CDP. Phe342 is an ADP binding site. Glu343 contributes to the AMP binding site. Asp374 serves as a coordination point for Mg(2+). Thr375 contributes to the ATP binding site.

This sequence belongs to the phosphoglycerate kinase family. Monomer. The cofactor is Mg(2+).

It catalyses the reaction (2R)-3-phosphoglycerate + ATP = (2R)-3-phospho-glyceroyl phosphate + ADP. It functions in the pathway carbohydrate degradation; glycolysis; pyruvate from D-glyceraldehyde 3-phosphate: step 2/5. In Plasmodium falciparum (isolate 3D7), this protein is Phosphoglycerate kinase (PGK).